The following is a 443-amino-acid chain: Thymidine phosphorylase (443 aa).

It belongs to the thymidine/pyrimidine-nucleoside phosphorylase family. As to quaternary structure, homodimer.

The enzyme catalyses thymidine + phosphate = 2-deoxy-alpha-D-ribose 1-phosphate + thymine. Its pathway is pyrimidine metabolism; dTMP biosynthesis via salvage pathway; dTMP from thymine: step 1/2. Its function is as follows. The enzymes which catalyze the reversible phosphorolysis of pyrimidine nucleosides are involved in the degradation of these compounds and in their utilization as carbon and energy sources, or in the rescue of pyrimidine bases for nucleotide synthesis. In Aeromonas salmonicida (strain A449), this protein is Thymidine phosphorylase.